The primary structure comprises 906 residues: MCRIAGGPRTLLPLLAALLQASLEASGELALCKTGFPEDVYSAVLPKTVHEGQPLLNVKFSNCNRKRKVQYESSEPADFKVDEDGTVYAVRSFPLSAEQAKFLIYAQDKETQEKWQVAVNLSLEPSLTEEPMKEPHEIEEIVFPRQLAKHSGALQRQKRDWVIPPINLPENSRGPFPQELVRIRSDRDKNLSLRYSVTGPGADQPPTGIFIINPISGQLSVTKPLDRELIARFHLRAHAVDINGNQVENPIDIVINVIDMNDNRPEFLHQVWNGSVPEGSKPGTYVMTVTAIDADDPNALNGMLRYRILSQAPSTPSPNMFTINNETGDIITVAAGLDREKVQQYTLIIQATDMEGNPTYGLSNTATAVITVTDVNDNPPEFTAMTFYGEVPENRVDVIVANLTVTDKDQPHTPAWNAAYRISGGDPTGRFAILTDPNSNDGLVTVVKPIDFETNRMFVLTVAAENQVPLAKGIQHPPQSTATVSVTVIDVNENPYFAPNPKIIRQEEGLHAGTMLTTLTAQDPDRYMQQNIRYTKLSDPANWLKIDPVNGQITTIAVLDRESPNVKNNIYNATFLASDNGIPPMSGTGTLQIYLLDINDNAPQVLPQEAETCETPEPNSINITALDYDIDPNAGPFAFDLPLSPATIKRNWTITRLNGDFAQLNLKIKFLEAGIYEVPIVITDSGNPPKSNISILRVKVCQCDSNGDCTDVDRIVGAGLGTGTIIAILLCIIILLILVLMFVVWMKRRDKERQAKQLLIDPEDDVRDNILKYDEEGGGEEDQDYDLSQLQQPDTVEPDAIKPVGIRRLDERPIHAEPQYPVRSAAPHPGDIGDFINEGLKAADNDPTAPPYDSLLVFDYEGSGSTAGSLSSLNSSSSGGDQDYDYLNDWGPRFKKLADMYGGGDD.

The first 25 residues, 1–25 (MCRIAGGPRTLLPLLAALLQASLEA), serve as a signal peptide directing secretion. A propeptide spanning residues 26 to 159 (SGELALCKTG…HSGALQRQKR (134 aa)) is cleaved from the precursor. Ser96 carries the phosphoserine modification. 5 consecutive Cadherin domains span residues 160–267 (DWVI…RPEF), 268–382 (LHQV…PPEF), 383–497 (TAMT…NPYF), 498–603 (APNP…DNAP), and 604–717 (QVLP…RIVG). Residues 160–724 (DWVIPPINLP…IVGAGLGTGT (565 aa)) lie on the Extracellular side of the membrane. Residue Glu170 participates in Ca(2+) binding. The N-linked (GlcNAc...) asparagine glycan is linked to Asn190. Residues Asp226, Glu228, Asp259, Met260, Asn261, Asp262, and Asn263 each contribute to the Ca(2+) site. N-linked (GlcNAc...) asparagine glycosylation occurs at Asn273. Positions 293, 295, and 301 each coordinate Ca(2+). Asn325 carries N-linked (GlcNAc...) asparagine glycosylation. Asp353 is a binding site for Ca(2+). Asn402, Asn572, Asn622, Asn651, and Asn692 each carry an N-linked (GlcNAc...) asparagine glycan. The chain crosses the membrane as a helical span at residues 725-745 (IIAILLCIIILLILVLMFVVW). The Cytoplasmic segment spans residues 746-906 (MKRRDKERQA…LADMYGGGDD (161 aa)). Over residues 863-880 (SGSTAGSLSSLNSSSSGG) the composition is skewed to low complexity. Positions 863–883 (SGSTAGSLSSLNSSSSGGDQD) are disordered.

Homodimer (via extracellular region). Can also form heterodimers with other cadherins (via extracellular region). Dimerization occurs in trans, i.e. with a cadherin chain from another cell. Interacts with PCDH8; this complex may also include TAOK2. The interaction with PCDH8 may lead to internalization through TAOK2/p38 MAPK pathway. Identified in a complex containing FGFR4, NCAM1, CDH2, PLCG1, FRS2, SRC, SHC1, GAP43 and CTTN. May interact with OBSCN (via protein kinase domain 2). Interacts with FBXO45. In terms of processing, cleaved by MMP24. Ectodomain cleavage leads to the generation of a soluble 90 kDa N-terminal soluble fragment and a 45 kDa membrane-bound C-terminal fragment 1 (CTF1), which is further cleaved by gamma-secretase into a 35 kDa. Cleavage in neural stem cells by MMP24 affects CDH2-mediated anchorage of neural stem cells to ependymocytes in the adult subependymal zone, leading to modulate neural stem cell quiescence. May be phosphorylated by OBSCN. As to expression, in testis, expressed in Sertoli and germ cells.

The protein localises to the cell membrane. It is found in the sarcolemma. Its subcellular location is the cell junction. The protein resides in the cell surface. It localises to the desmosome. The protein localises to the adherens junction. In terms of biological role, calcium-dependent cell adhesion protein; preferentially mediates homotypic cell-cell adhesion by dimerization with a CDH2 chain from another cell. Cadherins may thus contribute to the sorting of heterogeneous cell types. Acts as a regulator of neural stem cells quiescence by mediating anchorage of neural stem cells to ependymocytes in the adult subependymal zone: upon cleavage by MMP24, CDH2-mediated anchorage is affected, leading to modulate neural stem cell quiescence. Plays a role in cell-to-cell junction formation between pancreatic beta cells and neural crest stem (NCS) cells, promoting the formation of processes by NCS cells. Required for proper neurite branching. Required for pre- and postsynaptic organization. CDH2 may be involved in neuronal recognition mechanism. In hippocampal neurons, may regulate dendritic spine density. The chain is Cadherin-2 (Cdh2) from Rattus norvegicus (Rat).